We begin with the raw amino-acid sequence, 622 residues long: Threonine--tRNA ligase (622 aa).

Positions methionine 1–glutamate 141 are editing domain. The segment at proline 199 to proline 498 is catalytic. Zn(2+) is bound by residues cysteine 291, histidine 343, and histidine 467.

It belongs to the class-II aminoacyl-tRNA synthetase family. In terms of assembly, homodimer. Requires Zn(2+) as cofactor.

The protein localises to the cytoplasm. It carries out the reaction tRNA(Thr) + L-threonine + ATP = L-threonyl-tRNA(Thr) + AMP + diphosphate + H(+). Its function is as follows. Catalyzes the attachment of threonine to tRNA(Thr) in a two-step reaction: L-threonine is first activated by ATP to form Thr-AMP and then transferred to the acceptor end of tRNA(Thr). Also edits incorrectly charged L-seryl-tRNA(Thr). The chain is Threonine--tRNA ligase from Methanococcus maripaludis (strain C5 / ATCC BAA-1333).